A 75-amino-acid polypeptide reads, in one-letter code: Putative membrane protein insertion efficiency factor (75 aa).

The protein belongs to the UPF0161 family.

It localises to the cell membrane. Functionally, could be involved in insertion of integral membrane proteins into the membrane. The polypeptide is Putative membrane protein insertion efficiency factor (Bacillus velezensis (strain DSM 23117 / BGSC 10A6 / LMG 26770 / FZB42) (Bacillus amyloliquefaciens subsp. plantarum)).